A 105-amino-acid polypeptide reads, in one-letter code: Small ribosomal subunit protein uS17 (105 aa).

Belongs to the universal ribosomal protein uS17 family. As to quaternary structure, part of the 30S ribosomal subunit. Contacts protein S12.

Its function is as follows. One of the primary rRNA binding proteins, it binds directly to 16S rRNA where it helps nucleate assembly of the platform and body of the 30S subunit by bringing together and stabilizing interactions between several different RNA helices. The combined cluster of proteins S8, S12 and S17 appears to hold together the shoulder and platform of the 30S subunit. This is Small ribosomal subunit protein uS17 from Thermus thermophilus (strain ATCC 27634 / DSM 579 / HB8).